A 505-amino-acid polypeptide reads, in one-letter code: Apolipoprotein N-acyltransferase (505 aa).

The next 7 membrane-spanning stretches (helical) occupy residues 6–26 (PSIL…CLAF), 29–49 (FDIW…ATLV), 53–73 (TAML…VQWV), 80–100 (FGGV…SYLG), 119–139 (FVLA…FTGF), 152–172 (PFAQ…VILL), and 189–209 (TFTK…LQFV). Residues 223 to 469 (IQANIEQQLK…TNTLTAEIAT (247 aa)) form the CN hydrolase domain. Glu263 (proton acceptor) is an active-site residue. Lys328 is a catalytic residue. The Nucleophile role is filled by Cys379. The chain crosses the membrane as a helical span at residues 475–495 (LFGQFGHWLIYSLSFICVAFG).

Belongs to the CN hydrolase family. Apolipoprotein N-acyltransferase subfamily.

Its subcellular location is the cell inner membrane. It carries out the reaction N-terminal S-1,2-diacyl-sn-glyceryl-L-cysteinyl-[lipoprotein] + a glycerophospholipid = N-acyl-S-1,2-diacyl-sn-glyceryl-L-cysteinyl-[lipoprotein] + a 2-acyl-sn-glycero-3-phospholipid + H(+). The protein operates within protein modification; lipoprotein biosynthesis (N-acyl transfer). Functionally, catalyzes the phospholipid dependent N-acylation of the N-terminal cysteine of apolipoprotein, the last step in lipoprotein maturation. In Haemophilus ducreyi (strain 35000HP / ATCC 700724), this protein is Apolipoprotein N-acyltransferase.